We begin with the raw amino-acid sequence, 1220 residues long: MNRIFGRKKKDKDSDEKGSTESENDFLSSLPAKANKRYSMAYSSLQPDGNNSTNSKSADKFDDKGKAVDTPEFFVNTINLLPNIEILAQLCSSLQSKPSAWSKSLIDCNGIEALLNVLAFIERNGQKDSDVILQSLAVTCLLSLLNSKYGIEKAIATPNSMIRLITSMDTPKADTRSSVFEILTAICMISEKGYQLILEAMTHFKQVRKERFRFTFLVESMKKVMNSSDKEYLTTCLTLVNGIVNSSEEIDERIQLRTEFTRLGLDEVISVNKNIPYEEAPDLLTQIDVYEDEQRADQEELSERFEDLDIDINDPQVIFNEIYKQAKDRLHHPLLAILQSLLSISSDTEVGMLSWFLIEKLVLQISVNKPMIGDDDGKVSLEDLLASTAPSVALQSEFQKNIEELAKVKDQLKKANFDLNIANQELSSRSHESSVLKSNMFNTVKQKDQEIIKLRGQMKRIDSNFFSPPGGDGDDHINVINTPEESSPHHESPRKQQQQTSKPPLNPKSSKPPISSSQLKEKSKSNLSSSSSDSLSNDFKSQVEVAQQQQPQQQNIESTLTPEPTQIIKEEPIVTTPPPAPPAPPPPPMMGGGPPPPPPPPMMGGGGPPPPPPPPMMGGGPPPPPPMGGKGGPPPPPGGGGFGLFNSNKPPANAPKFTVSKPTTKVKQFQWTKIPNKKLGETIFTNLGTIKTDWLNVGEIENLFFAPEANSQKKLEASDKKSTSSTKPGTVSVIDPKKSQNLAIYLSKFKCPLEEIKTALYTLDEDIFTMESLKALEQYLPTDEDMEAIKDYLKKDGELKMLTKAEHFLLEMDSVSSLAERVKSFYLKILFPDKLKEIKPDLELFTKTIKDIKNSKNFLKVMEVVLIIGNFLNGGTARGDCFGFKLDALLKLADTKTANNKSNLLVYIISELEQKFPDSLKFMDDLSGVQECVKISMNTISADLNLLKKDLDAVNNGIGKMKRSKEESYFFSTMDDFIKDANIEIKIAFDQFQEAEKNFQELAVLFGEESKIPSEEFFVTINRFIVMFDKCYKDFQRDKEAAERAIKRDEAKAKKAQQLKRMNGKIASSTNNKNPLASSSTSVGDGGMVEDIMQSVRDGDAFKQRRRLKGTKENTDDSSSITTISEQSENSNTSSITITTPSGIELDITPSKSGSRREKKTSKSSDKDKEKEKEKEKQCESTESEDINKKDINVAAKALTIVMRSKQTMHSRIDTFNFDA.

Residues 1-10 show a composition bias toward basic residues; sequence MNRIFGRKKK. The segment at 1 to 62 is disordered; sequence MNRIFGRKKK…TNSKSADKFD (62 aa). A GBD/FH3 domain is found at 6 to 373; the sequence is GRKKKDKDSD…QISVNKPMIG (368 aa). Over residues 11–20 the composition is skewed to basic and acidic residues; it reads DKDSDEKGST. The span at 41 to 56 shows a compositional bias: polar residues; that stretch reads AYSSLQPDGNNSTNSK. Residues 392–428 are a coiled coil; sequence VALQSEFQKNIEELAKVKDQLKKANFDLNIANQELSS. 3 disordered regions span residues 461-659, 711-732, and 1049-1192; these read IDSN…KFTV, SQKK…GTVS, and DEAK…KKDI. Low complexity-rich tracts occupy residues 501-518 and 525-554; these read SKPP…SSSQ and SNLS…PQQQ. The FH1 domain maps to 532 to 655; it reads SDSLSNDFKS…NSNKPPANAP (124 aa). Positions 555-564 are enriched in polar residues; that stretch reads NIESTLTPEP. Over residues 575–638 the composition is skewed to pro residues; the sequence is TTPPPAPPAP…GKGGPPPPPG (64 aa). The 399-residue stretch at 656–1054 folds into the FH2 domain; that stretch reads KFTVSKPTTK…AIKRDEAKAK (399 aa). A compositionally biased stretch (basic and acidic residues) spans 711–722; that stretch reads SQKKLEASDKKS. Residues 1032–1062 are a coiled coil; it reads YKDFQRDKEAAERAIKRDEAKAKKAQQLKRM. Residues 1066–1083 show a composition bias toward polar residues; sequence IASSTNNKNPLASSSTSV. Positions 1083–1158 constitute a DAD domain; sequence VGDGGMVEDI…TPSKSGSRRE (76 aa). The span at 1117-1142 shows a compositional bias: low complexity; the sequence is DSSSITTISEQSENSNTSSITITTPS. The span at 1161-1192 shows a compositional bias: basic and acidic residues; the sequence is TSKSSDKDKEKEKEKEKQCESTESEDINKKDI.

The protein belongs to the formin homology family. Diaphanous subfamily. In terms of assembly, interacts (via GBD/FH3 domain) with activated Rho-GTPases.

Its function is as follows. Formins play an important role in the nucleation of actin and the formation of linear actin filaments. This Dictyostelium discoideum (Social amoeba) protein is Formin-F (forF).